The sequence spans 138 residues: MVVAEANSGRAVYWGTGRRKSAVARVRLVPGTGQLIVNGKPGDLYFQFNANYLGVIKAPLETLGLENEYDILVKAEGGGLTGQADSVRLGVARALCQLDPENRPPLKTEGYLTRDPRAKERKKYGLHKARKAPQYSKR.

Residues 100–118 show a composition bias toward basic and acidic residues; the sequence is PENRPPLKTEGYLTRDPRA. The segment at 100–138 is disordered; sequence PENRPPLKTEGYLTRDPRAKERKKYGLHKARKAPQYSKR. Residues 119–138 are compositionally biased toward basic residues; that stretch reads KERKKYGLHKARKAPQYSKR.

It belongs to the universal ribosomal protein uS9 family.

In Trichormus variabilis (strain ATCC 29413 / PCC 7937) (Anabaena variabilis), this protein is Small ribosomal subunit protein uS9.